Here is a 153-residue protein sequence, read N- to C-terminus: Cytochrome c-type biogenesis protein CcmE (153 aa).

The Cytoplasmic portion of the chain corresponds to 1–8 (MMTPRQRR). A helical; Signal-anchor for type II membrane protein transmembrane segment spans residues 9–29 (MTWVALMVAGVSLAAFFALTA). Residues 30–153 (FQKNLLYFYT…PADYSEYRKK (124 aa)) are Periplasmic-facing. Residues histidine 124 and tyrosine 128 each coordinate heme. Residues 134–153 (AESLKKNGGLPADYSEYRKK) are disordered.

It belongs to the CcmE/CycJ family.

The protein localises to the cell inner membrane. Its function is as follows. Heme chaperone required for the biogenesis of c-type cytochromes. Transiently binds heme delivered by CcmC and transfers the heme to apo-cytochromes in a process facilitated by CcmF and CcmH. The sequence is that of Cytochrome c-type biogenesis protein CcmE from Methylococcus capsulatus (strain ATCC 33009 / NCIMB 11132 / Bath).